The following is a 743-amino-acid chain: 1,4-alpha-glucan branching enzyme GlgB (743 aa).

Asp-416 serves as the catalytic Nucleophile. Glu-469 acts as the Proton donor in catalysis.

The protein belongs to the glycosyl hydrolase 13 family. GlgB subfamily. Monomer.

It carries out the reaction Transfers a segment of a (1-&gt;4)-alpha-D-glucan chain to a primary hydroxy group in a similar glucan chain.. It participates in glycan biosynthesis; glycogen biosynthesis. In terms of biological role, catalyzes the formation of the alpha-1,6-glucosidic linkages in glycogen by scission of a 1,4-alpha-linked oligosaccharide from growing alpha-1,4-glucan chains and the subsequent attachment of the oligosaccharide to the alpha-1,6 position. In Shewanella baltica (strain OS185), this protein is 1,4-alpha-glucan branching enzyme GlgB.